A 154-amino-acid chain; its full sequence is Snaclec dabocetin subunit alpha (154 aa).

A signal peptide spans 1–23 (MGRFISVSFGLLVVFLSLSGTGA). 3 disulfides stabilise this stretch: cysteine 25–cysteine 36, cysteine 53–cysteine 148, and cysteine 123–cysteine 140. The 118-residue stretch at 32-149 (HEGHCYKVFK…CGDKNPFICK (118 aa)) folds into the C-type lectin domain.

It belongs to the snaclec family. In terms of assembly, heterodimer of subunits alpha and beta; disulfide-linked. As to expression, expressed by the venom gland.

Its subcellular location is the secreted. Inhibits ristocetin-induced platelet aggregation via binding to platelet glycoprotein Ibalpha (GP1BA). This is Snaclec dabocetin subunit alpha from Daboia siamensis (Eastern Russel's viper).